A 124-amino-acid chain; its full sequence is Type-4 ice-structuring protein (124 aa).

A signal peptide spans 1 to 20 (MKFSLIAAVALLALAQGSFA). Gln-21 bears the Pyrrolidone carboxylic acid mark.

It belongs to the apolipoprotein A1/A4/E family.

The protein localises to the secreted. In terms of biological role, antifreeze proteins lower the blood freezing point. This chain is Type-4 ice-structuring protein, found in Paralichthys olivaceus (Bastard halibut).